A 298-amino-acid polypeptide reads, in one-letter code: Phosphatidylserine decarboxylase proenzyme (298 aa).

Catalysis depends on charge relay system; for autoendoproteolytic cleavage activity residues Asp-113, His-169, and Ser-256. Residue Ser-256 is the Schiff-base intermediate with substrate; via pyruvic acid; for decarboxylase activity of the active site. Ser-256 is modified (pyruvic acid (Ser); by autocatalysis).

Belongs to the phosphatidylserine decarboxylase family. PSD-B subfamily. Prokaryotic type II sub-subfamily. Heterodimer of a large membrane-associated beta subunit and a small pyruvoyl-containing alpha subunit. The cofactor is pyruvate. In terms of processing, is synthesized initially as an inactive proenzyme. Formation of the active enzyme involves a self-maturation process in which the active site pyruvoyl group is generated from an internal serine residue via an autocatalytic post-translational modification. Two non-identical subunits are generated from the proenzyme in this reaction, and the pyruvate is formed at the N-terminus of the alpha chain, which is derived from the carboxyl end of the proenzyme. The autoendoproteolytic cleavage occurs by a canonical serine protease mechanism, in which the side chain hydroxyl group of the serine supplies its oxygen atom to form the C-terminus of the beta chain, while the remainder of the serine residue undergoes an oxidative deamination to produce ammonia and the pyruvoyl prosthetic group on the alpha chain. During this reaction, the Ser that is part of the protease active site of the proenzyme becomes the pyruvoyl prosthetic group, which constitutes an essential element of the active site of the mature decarboxylase.

The protein localises to the cell membrane. It carries out the reaction a 1,2-diacyl-sn-glycero-3-phospho-L-serine + H(+) = a 1,2-diacyl-sn-glycero-3-phosphoethanolamine + CO2. The protein operates within phospholipid metabolism; phosphatidylethanolamine biosynthesis; phosphatidylethanolamine from CDP-diacylglycerol: step 2/2. Functionally, catalyzes the formation of phosphatidylethanolamine (PtdEtn) from phosphatidylserine (PtdSer). The sequence is that of Phosphatidylserine decarboxylase proenzyme from Desulfitobacterium hafniense (strain Y51).